A 161-amino-acid chain; its full sequence is Regulator of ribonuclease activity A (161 aa).

The protein belongs to the RraA family. In terms of assembly, homotrimer. Binds to both RNA-binding sites in the C-terminal region of Rne and to RhlB.

It is found in the cytoplasm. Its function is as follows. Globally modulates RNA abundance by binding to RNase E (Rne) and regulating its endonucleolytic activity. Can modulate Rne action in a substrate-dependent manner by altering the composition of the degradosome. Modulates RNA-binding and helicase activities of the degradosome. This chain is Regulator of ribonuclease activity A, found in Edwardsiella ictaluri (strain 93-146).